We begin with the raw amino-acid sequence, 197 residues long: Recombination protein RecR (197 aa).

The segment at 56–71 adopts a C4-type zinc-finger fold; it reads CHVCGNYCESDTCNIC. Residues 79-174 form the Toprim domain; that stretch reads RIICVVEESK…KITKLASGIP (96 aa).

The protein belongs to the RecR family.

Functionally, may play a role in DNA repair. It seems to be involved in an RecBC-independent recombinational process of DNA repair. It may act with RecF and RecO. This is Recombination protein RecR from Fusobacterium nucleatum subsp. nucleatum (strain ATCC 25586 / DSM 15643 / BCRC 10681 / CIP 101130 / JCM 8532 / KCTC 2640 / LMG 13131 / VPI 4355).